Here is a 310-residue protein sequence, read N- to C-terminus: Pantothenate kinase (310 aa).

ATP is bound at residue 95 to 102; the sequence is GSVAVGKS.

This sequence belongs to the prokaryotic pantothenate kinase family.

It is found in the cytoplasm. It carries out the reaction (R)-pantothenate + ATP = (R)-4'-phosphopantothenate + ADP + H(+). It functions in the pathway cofactor biosynthesis; coenzyme A biosynthesis; CoA from (R)-pantothenate: step 1/5. This is Pantothenate kinase from Rhodococcus erythropolis (strain PR4 / NBRC 100887).